We begin with the raw amino-acid sequence, 1560 residues long: uncharacterized protein (1560 aa).

The disordered stretch occupies residues M1–N46. The segment covering F15–D28 has biased composition (acidic residues). Basic and acidic residues predominate over residues D29 to N46. Coiled-coil stretches lie at residues D36–N60 and K317–N359. The segment at K568–Y594 is disordered. The span at N583 to Y594 shows a compositional bias: low complexity. A coiled-coil region spans residues D1188 to N1239. Transmembrane regions (helical) follow at residues L1271–L1291 and L1314–S1334.

Its subcellular location is the membrane. This is an uncharacterized protein from Plasmodium falciparum (isolate 3D7).